A 370-amino-acid chain; its full sequence is Notoamide biosynthesis cluster protein J (370 aa).

The N-terminal stretch at Met-1 to Ala-22 is a signal peptide. Residues Asn-159, Asn-167, Asn-192, Asn-235, Asn-282, Asn-340, and Asn-346 are each glycosylated (N-linked (GlcNAc...) asparagine).

Part of the gene cluster that mediates the biosynthesis of notoamide, a fungal indole alkaloid that belongs to a family of natural products containing a characteristic bicyclo[2.2.2]diazaoctane core. The first step of notoamide biosynthesis involves coupling of L-proline and L-tryptophan by the bimodular NRPS notE, to produce cyclo-L-tryptophan-L-proline called brevianamide F. The reverse prenyltransferase notF then acts as a deoxybrevianamide E synthase and converts brevianamide F to deoxybrevianamide E via reverse prenylation at C-2 of the indole ring leading to the bicyclo[2.2.2]diazaoctane core. Deoxybrevianamide E is further hydroxylated at C-6 of the indole ring, likely catalyzed by the cytochrome P450 monooxygenase notG, to yield 6-hydroxy-deoxybrevianamide E. 6-hydroxy-deoxybrevianamide E is a specific substrate of the prenyltransferase notC for normal prenylation at C-7 to produce 6-hydroxy-7-prenyl-deoxybrevianamide, also called notoamide S. As the proposed pivotal branching point in notoamide biosynthesis, notoamide S can be diverted to notoamide E through an oxidative pyran ring closure putatively catalyzed by either notH cytochrome P450 monooxygenase or the notD FAD-linked oxidoreductase. This step would be followed by an indole 2,3-epoxidation-initiated pinacol-like rearrangement catalyzed by the notB FAD-dependent monooxygenase leading to the formation of notoamide C and notoamide D. On the other hand notoamide S is converted to notoamide T by notH (or notD), a bifunctional oxidase that also functions as the intramolecular Diels-Alderase responsible for generation of (+)-notoamide T. To generate antipodal (-)-notoaminide T, notH' (or notD') in Aspergillus versicolor is expected to catalyze a Diels-Alder reaction leading to the opposite stereochemistry. The remaining oxidoreductase notD (or notH) likely catalyzes the oxidative pyran ring formation to yield (+)-stephacidin A. The FAD-dependent monooxygenase notI is highly similar to notB and is predicted to catalyze a similar conversion from (+)-stephacidin A to (-)-notoamide B via the 2,3-epoxidation of (+)-stephacidin A followed by a pinacol-type rearrangement. Finally, it remains unclear which enzyme could be responsible for the final hydroxylation steps leading to notoamide A and sclerotiamide. The function of notJ in the notoamide biosynthesis has not been determined yet. The sequence is that of Notoamide biosynthesis cluster protein J from Aspergillus sp. (strain MF297-2).